Reading from the N-terminus, the 130-residue chain is Phosphoribosyl-AMP cyclohydrolase (130 aa).

Aspartate 78 is a binding site for Mg(2+). Residue cysteine 79 participates in Zn(2+) binding. Positions 80 and 82 each coordinate Mg(2+). Zn(2+) is bound by residues cysteine 96 and cysteine 103.

Belongs to the PRA-CH family. Homodimer. Requires Mg(2+) as cofactor. Zn(2+) is required as a cofactor.

It is found in the cytoplasm. The enzyme catalyses 1-(5-phospho-beta-D-ribosyl)-5'-AMP + H2O = 1-(5-phospho-beta-D-ribosyl)-5-[(5-phospho-beta-D-ribosylamino)methylideneamino]imidazole-4-carboxamide. The protein operates within amino-acid biosynthesis; L-histidine biosynthesis; L-histidine from 5-phospho-alpha-D-ribose 1-diphosphate: step 3/9. In terms of biological role, catalyzes the hydrolysis of the adenine ring of phosphoribosyl-AMP. The protein is Phosphoribosyl-AMP cyclohydrolase of Nitrosospira multiformis (strain ATCC 25196 / NCIMB 11849 / C 71).